The sequence spans 189 residues: Phosphoheptose isomerase (189 aa).

The SIS domain occupies 34-189; that stretch reads LVDALGNGKK…CDLLEKRLFG (156 aa). 49-51 provides a ligand contact to substrate; that stretch reads NGG. Positions 58 and 62 each coordinate Zn(2+). Residues glutamate 62, 91-92, 117-119, serine 122, and glutamine 169 each bind substrate; these read ND and STS. Positions 169 and 177 each coordinate Zn(2+).

It belongs to the SIS family. GmhA subfamily. As to quaternary structure, homotetramer. Zn(2+) is required as a cofactor.

Its subcellular location is the cytoplasm. It carries out the reaction 2 D-sedoheptulose 7-phosphate = D-glycero-alpha-D-manno-heptose 7-phosphate + D-glycero-beta-D-manno-heptose 7-phosphate. It participates in carbohydrate biosynthesis; D-glycero-D-manno-heptose 7-phosphate biosynthesis; D-glycero-alpha-D-manno-heptose 7-phosphate and D-glycero-beta-D-manno-heptose 7-phosphate from sedoheptulose 7-phosphate: step 1/1. Its function is as follows. Catalyzes the isomerization of sedoheptulose 7-phosphate in D-glycero-D-manno-heptose 7-phosphate. The protein is Phosphoheptose isomerase of Geotalea uraniireducens (strain Rf4) (Geobacter uraniireducens).